Here is a 324-residue protein sequence, read N- to C-terminus: Interactor of constitutive active ROPs 4 (324 aa).

Disordered regions lie at residues 1–74, 91–156, 175–201, and 289–324; these read MPKP…SGLE, LAKA…ASKE, SLSE…KAKE, and FVGS…KGQK. A compositionally biased stretch (low complexity) spans 13–28; sequence QRQSPRLRTSLLSTSS. Composition is skewed to basic and acidic residues over residues 29 to 50, 95 to 106, and 118 to 156; these read DPHH…DRRS, EAAKKRAQEELH, and PERD…ASKE. The stretch at 62–266 forms a coiled coil; it reads SQKKLGSRIS…ADAAAAVLSG (205 aa). Residues 313–324 are compositionally biased toward basic and acidic residues; the sequence is MFGDLWKKKGQK.

It belongs to the ICR family. As to quaternary structure, interacts with ARAC11 in vitro.

Its function is as follows. Acts as a scaffold, mediating interaction of ROPs with different proteins. In Arabidopsis thaliana (Mouse-ear cress), this protein is Interactor of constitutive active ROPs 4 (ICR4).